Here is a 930-residue protein sequence, read N- to C-terminus: Protein translocase subunit SecA (930 aa).

Residues Gln87, 105-109 (GEGKT), and Asp515 contribute to the ATP site. Residues Cys914, Cys916, Cys925, and His926 each contribute to the Zn(2+) site.

Belongs to the SecA family. As to quaternary structure, monomer and homodimer. Part of the essential Sec protein translocation apparatus which comprises SecA, SecYEG and auxiliary proteins SecDF-YajC and YidC. The cofactor is Zn(2+).

Its subcellular location is the cell inner membrane. The protein localises to the cytoplasm. It catalyses the reaction ATP + H2O + cellular proteinSide 1 = ADP + phosphate + cellular proteinSide 2.. Part of the Sec protein translocase complex. Interacts with the SecYEG preprotein conducting channel. Has a central role in coupling the hydrolysis of ATP to the transfer of proteins into and across the cell membrane, serving both as a receptor for the preprotein-SecB complex and as an ATP-driven molecular motor driving the stepwise translocation of polypeptide chains across the membrane. This Burkholderia thailandensis (strain ATCC 700388 / DSM 13276 / CCUG 48851 / CIP 106301 / E264) protein is Protein translocase subunit SecA.